Reading from the N-terminus, the 196-residue chain is Phosphoheptose isomerase (196 aa).

Residues 36 to 196 (MTNCLINGGK…GIDALLLGVE (161 aa)) form the SIS domain. Position 51 to 53 (51 to 53 (NGG)) interacts with substrate. Zn(2+) is bound by residues histidine 60 and glutamate 64. Residues glutamate 64, 93–94 (ND), 119–121 (STS), serine 124, and glutamine 174 contribute to the substrate site. The Zn(2+) site is built by glutamine 174 and histidine 182.

Belongs to the SIS family. GmhA subfamily. As to quaternary structure, homotetramer. Zn(2+) serves as cofactor.

The protein resides in the cytoplasm. The catalysed reaction is 2 D-sedoheptulose 7-phosphate = D-glycero-alpha-D-manno-heptose 7-phosphate + D-glycero-beta-D-manno-heptose 7-phosphate. It functions in the pathway carbohydrate biosynthesis; D-glycero-D-manno-heptose 7-phosphate biosynthesis; D-glycero-alpha-D-manno-heptose 7-phosphate and D-glycero-beta-D-manno-heptose 7-phosphate from sedoheptulose 7-phosphate: step 1/1. Catalyzes the isomerization of sedoheptulose 7-phosphate in D-glycero-D-manno-heptose 7-phosphate. In Dechloromonas aromatica (strain RCB), this protein is Phosphoheptose isomerase.